A 210-amino-acid polypeptide reads, in one-letter code: MKKNTLSAILMTLFLFISCNNSGKDGNTSANSADESVKGPNLTEISKKITDSNAVLLAVKEVEALLSSIDEIAAKAIGKKIHQNNGLDTENNHNGSLLAGAYAISTLIKQKLDGLKNEGLKEKIDAAKKCSETFTNKLKEKHTDLGKEGVTDADAKEAILKTNGTKTKGAEELGKLFESVEVLSKAAKEMLANSVKELTSPVVAESPKKP.

The first 18 residues, 1–18 (MKKNTLSAILMTLFLFIS), serve as a signal peptide directing secretion. Residue Cys19 is the site of N-palmitoyl cysteine attachment. Residue Cys19 is the site of S-diacylglycerol cysteine attachment.

The protein belongs to the OspC lipoprotein family. In terms of assembly, homodimer. Binds human plasminogen on the bacterial surface, also binds human plasmin. Interacts with tick I.ricinus salivary protein Iric-1. Interacts with human complement C4 beta chain (C4B); whole bacteria bind to wells coated with C4b. Binding is inhibited by human complement factor C2.

It localises to the cell outer membrane. It is found in the cell surface. Functionally, a major immunodominant protein in mammalian hosts. Required for the initial stages of mammalian infection. Interaction with tick I.ricinus salivary protein Salp15 protects the bacteria from antibody-mediated killing in vitro and in vivo. Inhibits macrophage-mediated phagocytosis of the bacteria. Binds human plasminogen; this probably confers an extracellular protease activity on the bacteria that allows it to traverse tissue. Binds human complement C4-B, which may inhibit the complement cascade. Experiments in mice suggest it may play another role after initial infection. In Borreliella burgdorferi (strain ATCC 35210 / DSM 4680 / CIP 102532 / B31) (Borrelia burgdorferi), this protein is Outer surface protein C.